Reading from the N-terminus, the 494-residue chain is Acetyl-coenzyme A carboxylase carboxyl transferase subunit beta, chloroplastic (494 aa).

Residues 226–494 (LWVQCENCYG…VPLNQNETEH (269 aa)) enclose the CoA carboxyltransferase N-terminal domain. Residues C230, C233, C249, and C252 each contribute to the Zn(2+) site. The C4-type zinc-finger motif lies at 230-252 (CENCYGLNYKKFLKSKMNICEQC).

Belongs to the AccD/PCCB family. In terms of assembly, acetyl-CoA carboxylase is a heterohexamer composed of biotin carboxyl carrier protein, biotin carboxylase and 2 subunits each of ACCase subunit alpha and ACCase plastid-coded subunit beta (accD). The cofactor is Zn(2+).

It is found in the plastid. It localises to the chloroplast stroma. The enzyme catalyses N(6)-carboxybiotinyl-L-lysyl-[protein] + acetyl-CoA = N(6)-biotinyl-L-lysyl-[protein] + malonyl-CoA. The protein operates within lipid metabolism; malonyl-CoA biosynthesis; malonyl-CoA from acetyl-CoA: step 1/1. Component of the acetyl coenzyme A carboxylase (ACC) complex. Biotin carboxylase (BC) catalyzes the carboxylation of biotin on its carrier protein (BCCP) and then the CO(2) group is transferred by the transcarboxylase to acetyl-CoA to form malonyl-CoA. This Coffea arabica (Arabian coffee) protein is Acetyl-coenzyme A carboxylase carboxyl transferase subunit beta, chloroplastic.